A 655-amino-acid chain; its full sequence is MAMAKARKPREALLWALSDLEENDFKKLKFYLRDMTLSEGQPPLARGELEGLIPVDLAELLISKYGEKEAVKVVLKGLKVMNLLELVDQLSHICLHDYREVYREHVRCLEEWQEAGVNGRYNQVLLVAKPSSESPESLACPFPEQELESVTVEALFDSGEKPSLAPSLVVLQGSAGTGKTTLARKMVLDWATGTLYPGRFDYVFYVSCKEVVLLLESKLEQLLFWCCGDNQAPVTEILRQPERLLFILDGFDELQRPFEEKLKKRGLSPKESLLHLLIRRHTLPTCSLLITTRPLALRNLEPLLKQARHVHILGFSEEERARYFSSYFTDEKQADRAFDIVQKNDILYKACQVPGICWVVCSWLQGQMERGKVVLETPRNSTDIFMAYVSTFLPPDDDGGCSELSRHRVLRSLCSLAAEGIQHQRFLFEEAELRKHNLDGPRLAAFLSSNDYQLGLAIKKFYSFRHISFQDFFHAMSYLVKEDQSRLGKESRREVQRLLEVKEQEGNDEMTLTMQFLLDISKKDSFSNLELKFCFRISPCLAQDLKHFKEQMESMKHNRTWDLEFSLYEAKIKNLVKGIQMNNVSFKIKHSNEKKSQSQNLFSVKSSLSHGPKEEQKCPSVHGQKEGKDNIAGTQKEASTGKGRGTEETPKNTYI.

One can recognise a Pyrin domain in the interval 1–96 (MAMAKARKPR…VDQLSHICLH (96 aa)). Positions 167–484 (SLVVLQGSAG…AMSYLVKEDQ (318 aa)) constitute an NACHT domain. 173-180 (GSAGTGKT) contacts ATP. Positions 597–609 (QSQNLFSVKSSLS) are enriched in polar residues. The tract at residues 597–655 (QSQNLFSVKSSLSHGPKEEQKCPSVHGQKEGKDNIAGTQKEASTGKGRGTEETPKNTYI) is disordered. Basic and acidic residues-rich tracts occupy residues 611 to 629 (GPKEEQKCPSVHGQKEGKD) and 644 to 655 (RGTEETPKNTYI).

Belongs to the NLRP family. As to quaternary structure, oligomerizes. Interacts with PYCARD. Also interacts with CASP1 and IL1B. Interacts with NOD1 and components of the NOD1 signaling pathway including RIPK2, NR2C2/TAK1 and IKBKG/NEMO. In terms of tissue distribution, highly expressed in basal and suprabasal epidermal cell layers with lower levels in dermal fibroblast cells (at protein level). Widely expressed with highest levels in heart, brain and skeletal muscle. Also expressed in liver, colon, dermis and epidermis. Little expression detected in myeloid cells or peripheral blood mononuclear cells.

The protein localises to the cytoplasm. The protein resides in the cell membrane. Its function is as follows. Inhibits autoprocessing of CASP1, CASP1-dependent IL1B secretion, PYCARD aggregation and PYCARD-mediated apoptosis but not apoptosis induced by FAS or BID. Displays anti-inflammatory activity. Required for immunity against C.albicans infection. Involved in the innate immune response by contributing to pro-inflammatory cytokine release in response to invasive bacterial infection. Contributes to T-cell-mediated inflammatory responses in the skin. Plays a role in protection against periodontitis through its involvement in induction of IL1A via ERK activation in oral epithelial cells infected with periodontal pathogens. Exhibits both ATPase and GTPase activities. The sequence is that of NACHT, LRR and PYD domains-containing protein 10 (NLRP10) from Homo sapiens (Human).